Reading from the N-terminus, the 269-residue chain is Expansin-B9 (269 aa).

The signal sequence occupies residues 1-24 (MGSLTTNIVLAVAVVAALVGGGSC). Residue Asn34 is glycosylated (N-linked (GlcNAc...) asparagine). Residues 63–169 (GGACGIKNVN…RRVRCKYPGG (107 aa)) enclose the Expansin-like EG45 domain. 3 disulfides stabilise this stretch: Cys66/Cys94, Cys97/Cys164, and Cys102/Cys108. Residues 183-264 (NYLAVLVKFV…NWMPDAIYVS (82 aa)) form the Expansin-like CBD domain.

This sequence belongs to the expansin family. Expansin B subfamily.

It localises to the secreted. The protein resides in the cell wall. It is found in the membrane. May cause loosening and extension of plant cell walls by disrupting non-covalent bonding between cellulose microfibrils and matrix glucans. No enzymatic activity has been found. May be required for rapid internodal elongation in deepwater rice during submergence. The sequence is that of Expansin-B9 (EXPB9) from Oryza sativa subsp. japonica (Rice).